Here is an 804-residue protein sequence, read N- to C-terminus: G-type lectin S-receptor-like serine/threonine-protein kinase At1g61490 (804 aa).

A signal peptide spans 1–24 (MGKKRIVFFACLLLFTVLLRFSYA). One can recognise a Bulb-type lectin domain in the interval 25-144 (GITTESPLSV…ASGRTLWESF (120 aa)). The Extracellular portion of the chain corresponds to 25–425 (GITTESPLSV…SELGGNKRNK (401 aa)). 6 N-linked (GlcNAc...) asparagine glycosylation sites follow: asparagine 53, asparagine 94, asparagine 117, asparagine 134, asparagine 236, and asparagine 267. The EGF-like domain occupies 278-314 (PANSCDIYGVCGPFGLCIVSVPLKCKCLKGFVPHSTE). Cystine bridges form between cysteine 282/cysteine 294 and cysteine 288/cysteine 302. 3 N-linked (GlcNAc...) asparagine glycosylation sites follow: asparagine 320, asparagine 336, and asparagine 375. The 83-residue stretch at 333 to 415 (CQGNSTGKDV…GEILSIRLAH (83 aa)) folds into the PAN domain. Intrachain disulfides connect cysteine 368–cysteine 389 and cysteine 372–cysteine 378. The chain crosses the membrane as a helical span at residues 426–446 (IIVASTVSLSLFVILTSAAFG). Topologically, residues 447–804 (FWRYRVKHKA…EMTQSMILGR (358 aa)) are cytoplasmic. The region spanning 490–775 (FSLSNKLGQG…DLPSPKQPTF (286 aa)) is the Protein kinase domain. Residues 496–504 (LGQGGFGSV) and lysine 518 contribute to the ATP site. A phosphoserine mark is found at serine 524 and serine 539. The segment at 579–596 (RKKLEVDWPKRFDIVQGI) is caM-binding. Aspartate 615 serves as the catalytic Proton acceptor. Residues serine 619 and serine 632 each carry the phosphoserine modification. Threonine 649 bears the Phosphothreonine mark. Serine 692 is subject to Phosphoserine.

The protein belongs to the protein kinase superfamily. Ser/Thr protein kinase family.

Its subcellular location is the cell membrane. It carries out the reaction L-seryl-[protein] + ATP = O-phospho-L-seryl-[protein] + ADP + H(+). It catalyses the reaction L-threonyl-[protein] + ATP = O-phospho-L-threonyl-[protein] + ADP + H(+). The polypeptide is G-type lectin S-receptor-like serine/threonine-protein kinase At1g61490 (Arabidopsis thaliana (Mouse-ear cress)).